Reading from the N-terminus, the 150-residue chain is UPF0540 protein At1g62080 (150 aa).

A signal peptide spans methionine 1–alanine 21. Residues alanine 119–lysine 135 show a composition bias toward low complexity. The disordered stretch occupies residues alanine 119 to aspartate 150.

It belongs to the UPF0540 family.

The chain is UPF0540 protein At1g62080 from Arabidopsis thaliana (Mouse-ear cress).